The primary structure comprises 90 residues: Small ribosomal subunit protein bS20 (90 aa).

Residues 1-29 form a disordered region; that stretch reads MANTASAEKRNRQAQKRRARNVQVRTGVK.

The protein belongs to the bacterial ribosomal protein bS20 family.

Binds directly to 16S ribosomal RNA. The polypeptide is Small ribosomal subunit protein bS20 (Anaeromyxobacter sp. (strain Fw109-5)).